A 196-amino-acid chain; its full sequence is Molybdenum cofactor guanylyltransferase (196 aa).

GTP is bound by residues 10-12, lysine 23, asparagine 51, aspartate 69, and aspartate 99; that span reads LAG. Mg(2+) is bound at residue aspartate 99.

The protein belongs to the MobA family. Monomer. The cofactor is Mg(2+).

It localises to the cytoplasm. It carries out the reaction Mo-molybdopterin + GTP + H(+) = Mo-molybdopterin guanine dinucleotide + diphosphate. Its function is as follows. Transfers a GMP moiety from GTP to Mo-molybdopterin (Mo-MPT) cofactor (Moco or molybdenum cofactor) to form Mo-molybdopterin guanine dinucleotide (Mo-MGD) cofactor. The chain is Molybdenum cofactor guanylyltransferase from Shewanella woodyi (strain ATCC 51908 / MS32).